The chain runs to 295 residues: Cop9 signalosome-interactor 1 (295 aa).

In terms of assembly, component of a COP9 signalosome-like (CSN) complex, composed of RRI1/CSN5, CSN9, RRI2/CSN10, PCI8/CSN11, CSN12 and CSI1. In the complex, it probably interacts directly with CSN9 and CSN12. Interacts also with RPN5.

The protein resides in the cytoplasm. It is found in the nucleus. Its function is as follows. Component of the COP9 signalosome (CSN) complex that acts as an regulator of the ubiquitin (Ubl) conjugation pathway by mediating the deneddylation of the cullin subunit of SCF-type E3 ubiquitin-protein ligase complexes The CSN complex is involved in the regulation of the mating pheromone response. The polypeptide is Cop9 signalosome-interactor 1 (CSI1) (Saccharomyces cerevisiae (strain ATCC 204508 / S288c) (Baker's yeast)).